The chain runs to 457 residues: Omega-hydroxypalmitate O-feruloyl transferase (457 aa).

Residues H184 and D404 each act as proton acceptor in the active site.

This sequence belongs to the plant acyltransferase family. As to expression, expressed in roots, seedlings, leaves, stems, flowers and siliques. Detected at the protein level in roots and in seed coats.

It carries out the reaction 16-hydroxyhexadecanoate + (E)-feruloyl-CoA = 16-feruloyloxyhexadecanoate + CoA. Functionally, involved in the synthesis of aromatics of the suberin polymer. Specifically affects the accumulation of the ferulate constituent of suberin in roots and seeds, but has no effect on the content of p-coumarate or sinapate. The chain is Omega-hydroxypalmitate O-feruloyl transferase (HHT1) from Arabidopsis thaliana (Mouse-ear cress).